The primary structure comprises 62 residues: Potassium channel toxin alpha-KTx Tx308 (62 aa).

The signal sequence occupies residues 1–18 (MQKLFIVLLLFCILRLDA). 3 disulfide bridges follow: cysteine 28/cysteine 46, cysteine 33/cysteine 59, and cysteine 37/cysteine 61.

It belongs to the short scorpion toxin superfamily. Potassium channel inhibitor family. Alpha-KTx 23 subfamily. In terms of tissue distribution, expressed by the venom gland.

It is found in the secreted. May block potassium channels. In Buthus israelis (Israeli scorpion), this protein is Potassium channel toxin alpha-KTx Tx308.